A 242-amino-acid chain; its full sequence is Protein HTATIP2 (242 aa).

The residue at position 2 (alanine 2) is an N-acetylalanine. Residues 2–25 form a required for interaction with elongation factor EEF1A1 region; that stretch reads AETEALSKLREDFRMQNKSVFILG. Residues serine 27, glycine 28, glutamate 29, threonine 30, arginine 52, arginine 53, leucine 92, glycine 93, tyrosine 143, lysine 147, and arginine 178 each coordinate NADPH. Tyrosine 143 functions as the Proton acceptor in the catalytic mechanism. Residue lysine 147 is part of the active site.

In terms of assembly, monomer. Forms homodimers during oxidative stress. Interacts (via N-terminus) with elongation factor EEF1A1 (via middle-region); the interaction is direct and competes with EEF1A1 binding to guanyl-nucleotide exchange factor EEF1B2, thereby inhibiting GDP for GTP exchange and reactivation of EEF1A1. Interacts with nuclear transport receptors XPO4, IPO5/RANBP5, IPO7, IPO9 and KPNB1 as well as GCN1L1/GCN1 and LRPPRC probably through their HEAT repeats. Binds NCOA5/CIA.

Its subcellular location is the cytoplasm. Functionally, represses translation by preventing reactivation of elongation factor eEF1A. May also inhibit nuclear import by competing with nuclear import substrates for binding to a subset of nuclear transport receptors. Has additionally been proposed to act as a redox sensor involved in cellular oxidative stress surveillance. This chain is Protein HTATIP2 (HTATIP2), found in Pan paniscus (Pygmy chimpanzee).